A 1230-amino-acid chain; its full sequence is ATP-dependent helicase/nuclease subunit A (1230 aa).

The 471-residue stretch at 3–473 folds into the UvrD-like helicase ATP-binding domain; sequence TKFTKNQQRA…IDLADNFRSQ (471 aa). 24 to 31 serves as a coordination point for ATP; it reads ASAGSGKT. One can recognise a UvrD-like helicase C-terminal domain in the interval 500–782; the sequence is EAKLVPKAAY…RIMTIHASKG (283 aa).

The protein belongs to the helicase family. AddA subfamily. In terms of assembly, heterodimer of AddA and AddB/RexB. Mg(2+) is required as a cofactor.

The catalysed reaction is Couples ATP hydrolysis with the unwinding of duplex DNA by translocating in the 3'-5' direction.. It carries out the reaction ATP + H2O = ADP + phosphate + H(+). In terms of biological role, the heterodimer acts as both an ATP-dependent DNA helicase and an ATP-dependent, dual-direction single-stranded exonuclease. Recognizes the chi site generating a DNA molecule suitable for the initiation of homologous recombination. The AddA nuclease domain is required for chi fragment generation; this subunit has the helicase and 3' -&gt; 5' nuclease activities. The chain is ATP-dependent helicase/nuclease subunit A from Leuconostoc mesenteroides subsp. mesenteroides (strain ATCC 8293 / DSM 20343 / BCRC 11652 / CCM 1803 / JCM 6124 / NCDO 523 / NBRC 100496 / NCIMB 8023 / NCTC 12954 / NRRL B-1118 / 37Y).